A 340-amino-acid chain; its full sequence is CRISPR-associated protein Cas7 (340 aa).

In terms of assembly, component of the Cascade-like complex (Cascade I-B), composed of Cas5, Cas6, Cas7 and crRNA.

It is found in the cytoplasm. Its function is as follows. CRISPR (clustered regularly interspaced short palindromic repeat) is an adaptive immune system that provides protection against mobile genetic elements (viruses, transposable elements and conjugative plasmids). CRISPR clusters contain sequences complementary to antecedent mobile elements and target invading nucleic acids. CRISPR clusters are transcribed and processed into CRISPR RNA (crRNA). Plasmid targeted by CRISPR locus P1 transform wild-type cells very poorly. This protein helps process or stabilize pre-crRNA into individual crRNA units, in vivo Cas6 and Cas7 are also required for optimal crRNA processing and/or stability. In Haloferax volcanii (strain ATCC 29605 / DSM 3757 / JCM 8879 / NBRC 14742 / NCIMB 2012 / VKM B-1768 / DS2) (Halobacterium volcanii), this protein is CRISPR-associated protein Cas7.